A 160-amino-acid polypeptide reads, in one-letter code: Large ribosomal subunit protein eL21 (160 aa).

Belongs to the eukaryotic ribosomal protein eL21 family.

This Encephalitozoon cuniculi (strain GB-M1) (Microsporidian parasite) protein is Large ribosomal subunit protein eL21 (RPL21).